We begin with the raw amino-acid sequence, 241 residues long: Phosphoadenosine 5'-phosphosulfate reductase (241 aa).

The active-site Nucleophile; cysteine thiosulfonate intermediate is cysteine 235.

It belongs to the PAPS reductase family. CysH subfamily.

It is found in the cytoplasm. It catalyses the reaction [thioredoxin]-disulfide + sulfite + adenosine 3',5'-bisphosphate + 2 H(+) = [thioredoxin]-dithiol + 3'-phosphoadenylyl sulfate. It participates in sulfur metabolism; hydrogen sulfide biosynthesis; sulfite from sulfate: step 3/3. In terms of biological role, catalyzes the formation of sulfite from phosphoadenosine 5'-phosphosulfate (PAPS) using thioredoxin as an electron donor. The polypeptide is Phosphoadenosine 5'-phosphosulfate reductase (Xanthomonas axonopodis pv. citri (strain 306)).